A 462-amino-acid polypeptide reads, in one-letter code: uncharacterized protein (462 aa).

Asp12, His14, Asp48, Asn81, His179, and His202 together coordinate a divalent metal cation. Residues 258 to 291 are a coiled coil; the sequence is ESAETKAFLNEKEREAEEKLSDAVAELAQDAEVK.

It belongs to the metallophosphoesterase superfamily. A divalent metal cation is required as a cofactor.

This is an uncharacterized protein from Bacillus subtilis (strain 168).